The sequence spans 346 residues: MIQFHIEAPDKGLEAALQDKIDNLTKPKGSLGTLEALALQVGLIQQTLSPVLRHPVNVIYASDHGIADEGVSKSPKEVTRQVIHNFLNGGAGVCYLARQHGFELKIVDGGVDFDFPVIPQLIDRKVRKGGTRNFLHEAAMTVEEMEKALQYGADIVTDCYNEGCNVISFGEMGIGNTAASSMWMTCLTQIPLIDCVGAGSGLDSEGVRHKYNVLKRSLENYKGDGSALDVMRYFGGYEMVMAVGGMLRAAELKMIILVDGFIMTNCVLVASRLYPEMQSYCVFGHCGDEAGHKRVLDFLGAKALLDLGLRLGEGSGSVCAYPILDSAVRMINEMHSFKQAAITKYF.

Glutamate 313 functions as the Proton acceptor in the catalytic mechanism.

This sequence belongs to the CobT family.

The catalysed reaction is 5,6-dimethylbenzimidazole + nicotinate beta-D-ribonucleotide = alpha-ribazole 5'-phosphate + nicotinate + H(+). It participates in nucleoside biosynthesis; alpha-ribazole biosynthesis; alpha-ribazole from 5,6-dimethylbenzimidazole: step 1/2. In terms of biological role, catalyzes the synthesis of alpha-ribazole-5'-phosphate from nicotinate mononucleotide (NAMN) and 5,6-dimethylbenzimidazole (DMB). The polypeptide is Nicotinate-nucleotide--dimethylbenzimidazole phosphoribosyltransferase (Parabacteroides distasonis (strain ATCC 8503 / DSM 20701 / CIP 104284 / JCM 5825 / NCTC 11152)).